Reading from the N-terminus, the 198-residue chain is Protein GrpE (198 aa).

Belongs to the GrpE family. In terms of assembly, homodimer.

Its subcellular location is the cytoplasm. Functionally, participates actively in the response to hyperosmotic and heat shock by preventing the aggregation of stress-denatured proteins, in association with DnaK and GrpE. It is the nucleotide exchange factor for DnaK and may function as a thermosensor. Unfolded proteins bind initially to DnaJ; upon interaction with the DnaJ-bound protein, DnaK hydrolyzes its bound ATP, resulting in the formation of a stable complex. GrpE releases ADP from DnaK; ATP binding to DnaK triggers the release of the substrate protein, thus completing the reaction cycle. Several rounds of ATP-dependent interactions between DnaJ, DnaK and GrpE are required for fully efficient folding. The polypeptide is Protein GrpE (Lysinibacillus sphaericus (Bacillus sphaericus)).